The sequence spans 411 residues: LL-diaminopimelate aminotransferase (411 aa).

Substrate-binding residues include tyrosine 15 and glycine 42. Pyridoxal 5'-phosphate-binding positions include tyrosine 72, serine 108–lysine 109, tyrosine 132, asparagine 187, tyrosine 218, and serine 246–serine 248. Residues lysine 109, tyrosine 132, and asparagine 187 each contribute to the substrate site. Lysine 249 carries the post-translational modification N6-(pyridoxal phosphate)lysine. The pyridoxal 5'-phosphate site is built by arginine 257 and asparagine 292. Substrate is bound by residues asparagine 292 and arginine 388.

Belongs to the class-I pyridoxal-phosphate-dependent aminotransferase family. LL-diaminopimelate aminotransferase subfamily. Homodimer. The cofactor is pyridoxal 5'-phosphate.

The catalysed reaction is (2S,6S)-2,6-diaminopimelate + 2-oxoglutarate = (S)-2,3,4,5-tetrahydrodipicolinate + L-glutamate + H2O + H(+). The protein operates within amino-acid biosynthesis; L-lysine biosynthesis via DAP pathway; LL-2,6-diaminopimelate from (S)-tetrahydrodipicolinate (aminotransferase route): step 1/1. Functionally, involved in the synthesis of meso-diaminopimelate (m-DAP or DL-DAP), required for both lysine and peptidoglycan biosynthesis. Catalyzes the direct conversion of tetrahydrodipicolinate to LL-diaminopimelate. This chain is LL-diaminopimelate aminotransferase, found in Synechococcus sp. (strain JA-3-3Ab) (Cyanobacteria bacterium Yellowstone A-Prime).